Consider the following 622-residue polypeptide: MALLQIAEPGLSAAPHQRKLAVGIDLGTTNSLVATVRSGQAETLGDNNNQHLLPSVVSYTAEQVVVGEQAKHDASLDPANTIVSVKRFLGRSLNDIRRSYPDLPYDFDESNPNSPLLNVTGRQVNPVEVSSEILTTLRLRAEQSLGEELSGAVVTVPAYFDDAQRQGTKDAAQLAGLKVLRLLNEPTAAAIAYGLDTAQEGVIAVYDLGGGTFDISILRLSKGVFEVLATGGDSALGGDDFDHMIVKHFRQQLGLEGALSKRLHRVLLDKAKFAKESLSDNDTVTVDFADDEQKLLSLSISRETFQGLIADLTKSTLRACRRALKDAELEKDEVLEVVMVGGSTRVPYVREQVGEFFGRTPLTSIDPDKVVAIGASIQADILVGNKPDGEMLLLDVLPLSLGLETMGGLVEKVIHRNTTIPVAKAQEFTTFKDGQTAMMIHVLQGERELVDDCRSLAKFTLHGIPPMAAGAAHIRVTFQVDADGLLNVMAMEKSSGVQAEIQVKPSYGLDESQISDMLKASMQNATGDMQARMLKEQQVEAARVHEALQAALNADGAELLSAAEIGTIQASLEVLDIAGKNDDIDAIKQAISAADAASQIFAEKRMDHSIKKALAGHTVDSI.

The protein belongs to the heat shock protein 70 family.

Its function is as follows. Chaperone involved in the maturation of iron-sulfur cluster-containing proteins. Has a low intrinsic ATPase activity which is markedly stimulated by HscB. This chain is Chaperone protein HscA homolog, found in Pseudoalteromonas atlantica (strain T6c / ATCC BAA-1087).